Reading from the N-terminus, the 313-residue chain is Maintenance of mitochondrial morphology protein 1 (313 aa).

Residues Met-1–Gly-12 are Lumenal-facing. A helical membrane pass occupies residues Leu-13–Phe-33. At Cys-34–Asp-313 the chain is on the cytoplasmic side. The segment covering Ala-42 to Asn-63 has biased composition (polar residues). Residues Ala-42–Lys-65 form a disordered region. Residues Glu-90–Pro-288 enclose the SMP-LTD domain.

This sequence belongs to the MMM1 family. Homodimer. Component of the ER-mitochondria encounter structure (ERMES) or MDM complex, composed of mmm1, mdm10, mdm12 and mdm34. A mmm1 homodimer associates with one molecule of mdm12 on each side in a pairwise head-to-tail manner, and the SMP-LTD domains of mmm1 and mdm12 generate a continuous hydrophobic tunnel for phospholipid trafficking.

It is found in the endoplasmic reticulum membrane. Functionally, component of the ERMES/MDM complex, which serves as a molecular tether to connect the endoplasmic reticulum (ER) and mitochondria. Components of this complex are involved in the control of mitochondrial shape and protein biogenesis, and function in nonvesicular lipid trafficking between the ER and mitochondria. The mdm12-mmm1 subcomplex functions in the major beta-barrel assembly pathway that is responsible for biogenesis of all outer membrane beta-barrel proteins, and acts in a late step after the SAM complex. The mdm10-mdm12-mmm1 subcomplex further acts in the TOM40-specific pathway after the action of the mdm12-mmm1 complex. Essential for establishing and maintaining the structure of mitochondria and maintenance of mtDNA nucleoids. The protein is Maintenance of mitochondrial morphology protein 1 of Schizosaccharomyces pombe (strain 972 / ATCC 24843) (Fission yeast).